Here is a 220-residue protein sequence, read N- to C-terminus: Adenylate kinase (220 aa).

10-15 is an ATP binding site; it reads GAGKGT. Positions 30-59 are NMP; it reads STGDMLRAAVKAGTPLGVEAKGYMDAGKLV. Residues Thr-31, Arg-36, 57–59, 85–88, and Gln-92 contribute to the AMP site; these read KLV and GFPR. Residues 122 to 159 are LID; that stretch reads GRRTHPASGRTYHVKFNPPKVEGHDDVTGEPLIQRDDD. ATP contacts are provided by residues Arg-123 and 132–133; that span reads TY. Residues Arg-156 and Arg-167 each coordinate AMP. Position 206 (Gly-206) interacts with ATP.

The protein belongs to the adenylate kinase family. As to quaternary structure, monomer.

It localises to the cytoplasm. It catalyses the reaction AMP + ATP = 2 ADP. Its pathway is purine metabolism; AMP biosynthesis via salvage pathway; AMP from ADP: step 1/1. Catalyzes the reversible transfer of the terminal phosphate group between ATP and AMP. Plays an important role in cellular energy homeostasis and in adenine nucleotide metabolism. This Burkholderia lata (strain ATCC 17760 / DSM 23089 / LMG 22485 / NCIMB 9086 / R18194 / 383) protein is Adenylate kinase.